Reading from the N-terminus, the 245-residue chain is Enolase-phosphatase E1 (245 aa).

This sequence belongs to the HAD-like hydrolase superfamily. MasA/MtnC family. In terms of assembly, monomer. Mg(2+) is required as a cofactor.

It catalyses the reaction 5-methylsulfanyl-2,3-dioxopentyl phosphate + H2O = 1,2-dihydroxy-5-(methylsulfanyl)pent-1-en-3-one + phosphate. It functions in the pathway amino-acid biosynthesis; L-methionine biosynthesis via salvage pathway; L-methionine from S-methyl-5-thio-alpha-D-ribose 1-phosphate: step 3/6. It participates in amino-acid biosynthesis; L-methionine biosynthesis via salvage pathway; L-methionine from S-methyl-5-thio-alpha-D-ribose 1-phosphate: step 4/6. Bifunctional enzyme that catalyzes the enolization of 2,3-diketo-5-methylthiopentyl-1-phosphate (DK-MTP-1-P) into the intermediate 2-hydroxy-3-keto-5-methylthiopentenyl-1-phosphate (HK-MTPenyl-1-P), which is then dephosphorylated to form the acireductone 1,2-dihydroxy-3-keto-5-methylthiopentene (DHK-MTPene). The polypeptide is Enolase-phosphatase E1 (Parasynechococcus marenigrum (strain WH8102)).